Here is a 734-residue protein sequence, read N- to C-terminus: Photosystem I P700 chlorophyll a apoprotein A2 (734 aa).

Helical transmembrane passes span 46 to 69 (IFAS…FHVA), 135 to 158 (LYTG…LHLQ), 175 to 199 (LNHH…HVAI), 273 to 291 (IAHH…GHMY), 330 to 353 (LHFQ…QHMY), 369 to 395 (AALY…IFFI), 417 to 439 (AIIS…LYVH), and 517 to 535 (FLVH…LILV). [4Fe-4S] cluster-binding residues include C559 and C568. 2 consecutive transmembrane segments (helical) span residues 575–596 (AFYL…YWHW) and 643–665 (LSVW…MFLI). H654, M662, and Y670 together coordinate chlorophyll a. W671 lines the phylloquinone pocket. A helical membrane pass occupies residues 707–727 (LVGLAHFSVGYIFTYAAFLIA).

It belongs to the PsaA/PsaB family. As to quaternary structure, the PsaA/B heterodimer binds the P700 chlorophyll special pair and subsequent electron acceptors. PSI consists of a core antenna complex that captures photons, and an electron transfer chain that converts photonic excitation into a charge separation. The eukaryotic PSI reaction center is composed of at least 11 subunits. It depends on P700 is a chlorophyll a/chlorophyll a' dimer, A0 is one or more chlorophyll a, A1 is one or both phylloquinones and FX is a shared 4Fe-4S iron-sulfur center. as a cofactor.

The protein resides in the plastid. It localises to the chloroplast thylakoid membrane. The enzyme catalyses reduced [plastocyanin] + hnu + oxidized [2Fe-2S]-[ferredoxin] = oxidized [plastocyanin] + reduced [2Fe-2S]-[ferredoxin]. PsaA and PsaB bind P700, the primary electron donor of photosystem I (PSI), as well as the electron acceptors A0, A1 and FX. PSI is a plastocyanin-ferredoxin oxidoreductase, converting photonic excitation into a charge separation, which transfers an electron from the donor P700 chlorophyll pair to the spectroscopically characterized acceptors A0, A1, FX, FA and FB in turn. Oxidized P700 is reduced on the lumenal side of the thylakoid membrane by plastocyanin. This chain is Photosystem I P700 chlorophyll a apoprotein A2, found in Citrus sinensis (Sweet orange).